A 462-amino-acid chain; its full sequence is MEGENNMEKGLLLAKKEDSANTTPLLIFSTFIIVSASFTFGAAIGYTADTMSSIMSDLDLSLAQFSLFGSLSTFGGMIGAIFSAKAASAFGHKMTLWVADLFCITGWLAISLAKDIIWLDMGRFLVGIGVGLISYVVPVYIAEITPKHVRGAFTFSNQLLQNCGVAVVYYFGNFLSWRTLAIIGSIPCWIQVIGLFFIPESPRWLAKKGRDKECEEVLQKLRGRKYDIVPEACEIKISVEASKKNSNINIRSLFEKRYAHQLTIGIGLMLLQQLCGTAGISSYGSTLFKLAGFPARIGMMVLSLIVVPKSLMGLILVDRWGRRPLLMTSALGLCLSCITLAVAFGVKDVPGIGKITPIFCFIGILSFTMMFAIGMGALPWIIMSEIFPMDIKVLAGSLVTIANWFTGWIANYAFNFMLVWSPSGTFIISAIICGATIVFTWCLVPETRRLTLEEIQLSFVNV.

The next 12 membrane-spanning stretches (helical) occupy residues 25–45 (LLIF…AAIG), 62–82 (LAQF…GAIF), 101–121 (LFCI…WLDM), 124–144 (FLVG…IAEI), 151–171 (GAFT…VYYF), 179–199 (TLAI…FFIP), 262–282 (LTIG…GISS), 297–317 (IGMM…LILV), 326–346 (LMTS…AFGV), 358–378 (IFCF…MGAL), 399–419 (VTIA…FMLV), and 424–444 (GTFI…WCLV).

It belongs to the major facilitator superfamily. Sugar transporter (TC 2.A.1.1) family.

It localises to the membrane. Its function is as follows. Sugar transporter. In Arabidopsis thaliana (Mouse-ear cress), this protein is Sugar transporter ERD6-like 12 (SUGTL5).